We begin with the raw amino-acid sequence, 216 residues long: Phosphatidylserine decarboxylase proenzyme (216 aa).

The Schiff-base intermediate with substrate; via pyruvic acid role is filled by S182. S182 carries the post-translational modification Pyruvic acid (Ser); by autocatalysis.

Belongs to the phosphatidylserine decarboxylase family. PSD-A subfamily. As to quaternary structure, heterodimer of a large membrane-associated beta subunit and a small pyruvoyl-containing alpha subunit. Requires pyruvate as cofactor. In terms of processing, is synthesized initially as an inactive proenzyme. Formation of the active enzyme involves a self-maturation process in which the active site pyruvoyl group is generated from an internal serine residue via an autocatalytic post-translational modification. Two non-identical subunits are generated from the proenzyme in this reaction, and the pyruvate is formed at the N-terminus of the alpha chain, which is derived from the carboxyl end of the proenzyme. The post-translation cleavage follows an unusual pathway, termed non-hydrolytic serinolysis, in which the side chain hydroxyl group of the serine supplies its oxygen atom to form the C-terminus of the beta chain, while the remainder of the serine residue undergoes an oxidative deamination to produce ammonia and the pyruvoyl prosthetic group on the alpha chain.

The protein localises to the cell membrane. It catalyses the reaction a 1,2-diacyl-sn-glycero-3-phospho-L-serine + H(+) = a 1,2-diacyl-sn-glycero-3-phosphoethanolamine + CO2. The protein operates within phospholipid metabolism; phosphatidylethanolamine biosynthesis; phosphatidylethanolamine from CDP-diacylglycerol: step 2/2. Functionally, catalyzes the formation of phosphatidylethanolamine (PtdEtn) from phosphatidylserine (PtdSer). This chain is Phosphatidylserine decarboxylase proenzyme, found in Burkholderia pseudomallei (strain 1106a).